Consider the following 176-residue polypeptide: Inner membrane-spanning protein YciB (176 aa).

The next 5 membrane-spanning stretches (helical) occupy residues 23 to 43 (MIAA…FLYW), 50 to 70 (TMQW…IVLG), 74 to 94 (FIMW…LGSH), 119 to 139 (LTYM…FVFT), and 150 to 170 (MFGS…YLST).

Belongs to the YciB family.

It is found in the cell inner membrane. In terms of biological role, plays a role in cell envelope biogenesis, maintenance of cell envelope integrity and membrane homeostasis. The sequence is that of Inner membrane-spanning protein YciB from Neisseria gonorrhoeae (strain ATCC 700825 / FA 1090).